The sequence spans 499 residues: Ethanolamine-phosphate phospho-lyase (499 aa).

Lysine 278 is subject to N6-(pyridoxal phosphate)lysine.

The protein belongs to the class-III pyridoxal-phosphate-dependent aminotransferase family. Homotetramer. It depends on pyridoxal 5'-phosphate as a cofactor.

Its subcellular location is the mitochondrion. It catalyses the reaction phosphoethanolamine + H2O = acetaldehyde + NH4(+) + phosphate. Functionally, catalyzes the pyridoxal-phosphate-dependent breakdown of phosphoethanolamine, converting it to ammonia, inorganic phosphate and acetaldehyde. This is Ethanolamine-phosphate phospho-lyase (Etnppl) from Mus musculus (Mouse).